Here is a 253-residue protein sequence, read N- to C-terminus: FAS1 domain-containing protein CAGL0M08734g (253 aa).

The first 16 residues, 1–16, serve as a signal peptide directing secretion; that stretch reads MVALKYVLVPVALVAA. In terms of domain architecture, FAS1 spans 84 to 248; that stretch reads DIYLDSQISV…GVILVIDATL (165 aa).

It localises to the vacuole. The polypeptide is FAS1 domain-containing protein CAGL0M08734g (Candida glabrata (strain ATCC 2001 / BCRC 20586 / JCM 3761 / NBRC 0622 / NRRL Y-65 / CBS 138) (Yeast)).